We begin with the raw amino-acid sequence, 101 residues long: Helix-loop-helix protein 17 (101 aa).

Positions 14-27 (GVRLSINLRERCRM) are basic motif. Residues 14–68 (GVRLSINLRERCRMHDLNEALDDLRAVIPYAHGGSVRKLSKIATLLLAKNHIIMQ) enclose the bHLH domain. Positions 28-68 (HDLNEALDDLRAVIPYAHGGSVRKLSKIATLLLAKNHIIMQ) are helix-loop-helix motif.

As to expression, expressed in neuronal tissues of the head, including sheath cells of the cephalic sensilla (CEPsh) glia.

It is found in the nucleus. In terms of biological role, probable transcription factor that regulates the expression of dopamine receptors dop-1, dop-2 and dop-3 and thus dopamine-dependent behaviors. May act redundantly with hlh-31 and hlh-32 to regulate ventral CEPsh glia functions. May play a role in chemotactic responses in larvae. The polypeptide is Helix-loop-helix protein 17 (Caenorhabditis elegans).